The following is a 245-amino-acid chain: Terpene cyclase esdpB (245 aa).

Helical transmembrane passes span 19 to 39, 48 to 68, 75 to 95, 112 to 132, 140 to 160, 177 to 197, and 208 to 228; these read MVAS…VTTI, SGVT…FAVI, IAAL…YVSV, LPVV…ALSM, LYWG…GLLI, FIAS…WPSA, and WLSG…YHIS.

Belongs to the paxB family.

It is found in the membrane. It participates in secondary metabolite biosynthesis; terpenoid biosynthesis. Its function is as follows. Terpene cyclase; part of the cluster that mediates the biosynthesis of shearones, diterpenoid pyrones (DPs) which are structurally diverse meroterpenoids consisting of a diterpene linked by a pyrone, and which may exhibit a range of bioactivities. Within the pathway, esdpB takes part to the biosynthesis of the molecular scaffold by catalyzing the cyclization of the prenyl group initiated by protonation and ring-opening of the epoxide to produce the diterpenoid pyrone scaffold. The molecular scaffold is commonly biosynthesized by a series of enzymes including the non-reducing polyketide synthase (NR-PKS) esdpA that generates an alpha-pyrone; the prenyltransferase esdpC that attaches a geranylgeranyl pyrophosphate (GGPP) produced by the GGPP synthase (GGPPS) esdpD onto the pyrone unit; the FAD-dependent monooxygenase esdpE that converts an olefin on the diterpene unit into an epoxide; and the terpene cyclase esdpB that catalyzes the cyclization reactions to give the molecular backbone shearone A. In the modification steps, esdpF oxidizes the hydroxy group to a ketone at C-3 and esdpG then attaches hydroxy groups at both C-11 and C-12. After that, esdpI hydroxylates at C-20 and esdpH hydroxylates at C-6'. The ether bridge is generated by nucleophilic attack of the hydroxy group at C-20 to the carbonyl carbon at C-3. EsdpH can also functions prior to esdpI. The different combinations of these modification enzymes lead to the production of diverse shearone derivatives, shearone I being the end product of the pathway. The alpha-ketoglutarate-dependent dioxygenase esdpJ seems not to be involved in this pathway. The chain is Terpene cyclase esdpB from Penicillium shearii (Eupenicillium shearii).